The chain runs to 194 residues: Small ribosomal subunit protein eS7 (194 aa).

Belongs to the eukaryotic ribosomal protein eS7 family.

The chain is Small ribosomal subunit protein eS7 (rps-7) from Caenorhabditis elegans.